Consider the following 245-residue polypeptide: 1-(5-phosphoribosyl)-5-[(5-phosphoribosylamino)methylideneamino] imidazole-4-carboxamide isomerase (245 aa).

The Proton acceptor role is filled by Asp7. Asp129 functions as the Proton donor in the catalytic mechanism.

The protein belongs to the HisA/HisF family.

The protein resides in the cytoplasm. The enzyme catalyses 1-(5-phospho-beta-D-ribosyl)-5-[(5-phospho-beta-D-ribosylamino)methylideneamino]imidazole-4-carboxamide = 5-[(5-phospho-1-deoxy-D-ribulos-1-ylimino)methylamino]-1-(5-phospho-beta-D-ribosyl)imidazole-4-carboxamide. The protein operates within amino-acid biosynthesis; L-histidine biosynthesis; L-histidine from 5-phospho-alpha-D-ribose 1-diphosphate: step 4/9. This Shewanella sp. (strain W3-18-1) protein is 1-(5-phosphoribosyl)-5-[(5-phosphoribosylamino)methylideneamino] imidazole-4-carboxamide isomerase.